The sequence spans 610 residues: Elongation factor 4 (610 aa).

One can recognise a tr-type G domain in the interval 14 to 198; the sequence is ANIRNFSIVA…AIVTRLPPPQ (185 aa). Residues 26–31 and 145–148 contribute to the GTP site; these read DHGKST and NKVD.

This sequence belongs to the TRAFAC class translation factor GTPase superfamily. Classic translation factor GTPase family. LepA subfamily.

It localises to the cell inner membrane. It carries out the reaction GTP + H2O = GDP + phosphate + H(+). In terms of biological role, required for accurate and efficient protein synthesis under certain stress conditions. May act as a fidelity factor of the translation reaction, by catalyzing a one-codon backward translocation of tRNAs on improperly translocated ribosomes. Back-translocation proceeds from a post-translocation (POST) complex to a pre-translocation (PRE) complex, thus giving elongation factor G a second chance to translocate the tRNAs correctly. Binds to ribosomes in a GTP-dependent manner. This Nitrobacter hamburgensis (strain DSM 10229 / NCIMB 13809 / X14) protein is Elongation factor 4.